Here is a 385-residue protein sequence, read N- to C-terminus: Lipid-A-disaccharide synthase 2 (385 aa).

It belongs to the LpxB family.

The enzyme catalyses a lipid X + a UDP-2-N,3-O-bis[(3R)-3-hydroxyacyl]-alpha-D-glucosamine = a lipid A disaccharide + UDP + H(+). It functions in the pathway bacterial outer membrane biogenesis; LPS lipid A biosynthesis. Functionally, condensation of UDP-2,3-diacylglucosamine and 2,3-diacylglucosamine-1-phosphate to form lipid A disaccharide, a precursor of lipid A, a phosphorylated glycolipid that anchors the lipopolysaccharide to the outer membrane of the cell. This chain is Lipid-A-disaccharide synthase 2, found in Legionella pneumophila (strain Paris).